A 266-amino-acid polypeptide reads, in one-letter code: Glucosamine-6-phosphate deaminase (266 aa).

Catalysis depends on Asp72, which acts as the Proton acceptor; for enolization step. The active-site For ring-opening step is the Asp141. His143 functions as the Proton acceptor; for ring-opening step in the catalytic mechanism. Glu148 acts as the For ring-opening step in catalysis.

The protein belongs to the glucosamine/galactosamine-6-phosphate isomerase family. NagB subfamily. Homohexamer; trimer of disulfide-linked dimers.

It catalyses the reaction alpha-D-glucosamine 6-phosphate + H2O = beta-D-fructose 6-phosphate + NH4(+). Its pathway is amino-sugar metabolism; N-acetylneuraminate degradation; D-fructose 6-phosphate from N-acetylneuraminate: step 5/5. Allosterically activated by N-acetylglucosamine 6-phosphate (GlcNAc6P). Its function is as follows. Catalyzes the reversible isomerization-deamination of glucosamine 6-phosphate (GlcN6P) to form fructose 6-phosphate (Fru6P) and ammonium ion. This Shigella dysenteriae serotype 1 (strain Sd197) protein is Glucosamine-6-phosphate deaminase.